The sequence spans 174 residues: Gamma-crystallin D (174 aa).

Beta/gamma crystallin 'Greek key' domains follow at residues Gly-2 to Ser-40 and Gly-41 to Pro-83. The tract at residues His-84–Ser-87 is connecting peptide. 2 consecutive Beta/gamma crystallin 'Greek key' domains span residues His-88–Glu-128 and Gly-129–Met-171.

Belongs to the beta/gamma-crystallin family. In terms of tissue distribution, detected in the superior olivary complex of the auditory hindbrain.

Its function is as follows. Crystallins are the dominant structural components of the vertebrate eye lens. The sequence is that of Gamma-crystallin D (Crygd) from Mus musculus (Mouse).